The primary structure comprises 235 residues: Segregation and condensation protein A (235 aa).

This sequence belongs to the ScpA family. In terms of assembly, component of a cohesin-like complex composed of ScpA, ScpB and the Smc homodimer, in which ScpA and ScpB bind to the head domain of Smc. The presence of the three proteins is required for the association of the complex with DNA.

It is found in the cytoplasm. In terms of biological role, participates in chromosomal partition during cell division. May act via the formation of a condensin-like complex containing Smc and ScpB that pull DNA away from mid-cell into both cell halves. This Streptococcus agalactiae serotype Ia (strain ATCC 27591 / A909 / CDC SS700) protein is Segregation and condensation protein A.